A 141-amino-acid chain; its full sequence is Protein NrdI (141 aa).

The protein belongs to the NrdI family.

Its function is as follows. Probably involved in ribonucleotide reductase function. The polypeptide is Protein NrdI (Wigglesworthia glossinidia brevipalpis).